The primary structure comprises 429 residues: Serine hydroxymethyltransferase 1 (429 aa).

(6S)-5,6,7,8-tetrahydrofolate contacts are provided by residues L125 and 129 to 131 (GHL). K234 is subject to N6-(pyridoxal phosphate)lysine.

Belongs to the SHMT family. As to quaternary structure, homodimer. Requires pyridoxal 5'-phosphate as cofactor.

The protein resides in the cytoplasm. It catalyses the reaction (6R)-5,10-methylene-5,6,7,8-tetrahydrofolate + glycine + H2O = (6S)-5,6,7,8-tetrahydrofolate + L-serine. The protein operates within one-carbon metabolism; tetrahydrofolate interconversion. It functions in the pathway amino-acid biosynthesis; glycine biosynthesis; glycine from L-serine: step 1/1. Catalyzes the reversible interconversion of serine and glycine with tetrahydrofolate (THF) serving as the one-carbon carrier. This reaction serves as the major source of one-carbon groups required for the biosynthesis of purines, thymidylate, methionine, and other important biomolecules. Also exhibits THF-independent aldolase activity toward beta-hydroxyamino acids, producing glycine and aldehydes, via a retro-aldol mechanism. The protein is Serine hydroxymethyltransferase 1 of Agrobacterium fabrum (strain C58 / ATCC 33970) (Agrobacterium tumefaciens (strain C58)).